We begin with the raw amino-acid sequence, 224 residues long: tRNA (guanine-N(7)-)-methyltransferase (224 aa).

4 residues coordinate S-adenosyl-L-methionine: Glu54, Glu79, Glu106, and Asp129. Asp129 is an active-site residue. Substrate contacts are provided by Lys133 and Asp165.

The protein belongs to the class I-like SAM-binding methyltransferase superfamily. TrmB family.

It carries out the reaction guanosine(46) in tRNA + S-adenosyl-L-methionine = N(7)-methylguanosine(46) in tRNA + S-adenosyl-L-homocysteine. It participates in tRNA modification; N(7)-methylguanine-tRNA biosynthesis. Functionally, catalyzes the formation of N(7)-methylguanine at position 46 (m7G46) in tRNA. This is tRNA (guanine-N(7)-)-methyltransferase from Chlamydia abortus (strain DSM 27085 / S26/3) (Chlamydophila abortus).